We begin with the raw amino-acid sequence, 47 residues long: Conotoxin Cal6.18 (47 aa).

The N-terminal stretch at 1–19 (MKLTYVLIVAMLVLVVCRA) is a signal peptide.

It belongs to the conotoxin O1 superfamily. In terms of processing, may contain 3 disulfide bonds. In terms of tissue distribution, expressed by the venom duct.

The protein localises to the secreted. In terms of biological role, probable neurotoxin. The chain is Conotoxin Cal6.18 from Californiconus californicus (California cone).